The primary structure comprises 79 residues: ATP synthase subunit c (79 aa).

A run of 2 helical transmembrane segments spans residues 11-31 (MAAAIMMGLAAIGAAIGIGIL) and 53-73 (FFIVMGLVDAIPMIAVGLGLY).

It belongs to the ATPase C chain family. In terms of assembly, F-type ATPases have 2 components, F(1) - the catalytic core - and F(0) - the membrane proton channel. F(1) has five subunits: alpha(3), beta(3), gamma(1), delta(1), epsilon(1). F(0) has three main subunits: a(1), b(2) and c(10-14). The alpha and beta chains form an alternating ring which encloses part of the gamma chain. F(1) is attached to F(0) by a central stalk formed by the gamma and epsilon chains, while a peripheral stalk is formed by the delta and b chains.

The protein localises to the cell inner membrane. In terms of biological role, f(1)F(0) ATP synthase produces ATP from ADP in the presence of a proton or sodium gradient. F-type ATPases consist of two structural domains, F(1) containing the extramembraneous catalytic core and F(0) containing the membrane proton channel, linked together by a central stalk and a peripheral stalk. During catalysis, ATP synthesis in the catalytic domain of F(1) is coupled via a rotary mechanism of the central stalk subunits to proton translocation. Functionally, key component of the F(0) channel; it plays a direct role in translocation across the membrane. A homomeric c-ring of between 10-14 subunits forms the central stalk rotor element with the F(1) delta and epsilon subunits. The chain is ATP synthase subunit c from Yersinia enterocolitica serotype O:8 / biotype 1B (strain NCTC 13174 / 8081).